We begin with the raw amino-acid sequence, 311 residues long: Vomeronasal type-1 receptor 3 (311 aa).

Over 1-5 (MASKD) the chain is Extracellular. The helical transmembrane segment at 6 to 26 (FAIGMILLSQIMVGFLGNFFL) threads the bilayer. The Cytoplasmic portion of the chain corresponds to 27–51 (LYHYSFLCFTRGMLQSTDLILKHLT). A helical transmembrane segment spans residues 52-72 (IANSLVILSKGIPQTMAAFGL). Residues 73-92 (KDSLSDIGCKFVFYVHRVGR) are Extracellular-facing. The chain crosses the membrane as a helical span at residues 93 to 113 (AVCVGNACLLSVFQVITISPS). Over 114 to 130 (EFRWAELKLHAHKYIRS) the chain is Cytoplasmic. Residues 131–151 (FILVLCWILNTLVNITVLLHV) form a helical membrane-spanning segment. At 152–187 (TGKWNSINSTKTNDYGYCSGGSRSRIPHSLHIVLLS) the chain is on the extracellular side. Residue Asn159 is glycosylated (N-linked (GlcNAc...) asparagine). A helical transmembrane segment spans residues 188 to 208 (SLDVLCLGLMTLASGSMVFIL). The Cytoplasmic segment spans residues 209–232 (HRHKQQVQHIHGTNLSARSSPESR). A helical membrane pass occupies residues 233–249 (VTQSILVLVSTLCYFTR). The Extracellular segment spans residues 250–264 (SPPSLHMSLFPNPSW). Residues 265 to 285 (WLLNTSALITACFPMVSPFVL) form a helical membrane-spanning segment. Residues 286–311 (MSRHPRIPRLGSACCGRNPQFPKLVR) lie on the Cytoplasmic side of the membrane.

The protein belongs to the G-protein coupled receptor 1 family.

The protein localises to the cell membrane. Its function is as follows. Putative pheromone receptor. This is Vomeronasal type-1 receptor 3 (VN1R3) from Homo sapiens (Human).